The sequence spans 361 residues: Histidinol-phosphate aminotransferase (361 aa).

The residue at position 224 (K224) is an N6-(pyridoxal phosphate)lysine.

The protein belongs to the class-II pyridoxal-phosphate-dependent aminotransferase family. Histidinol-phosphate aminotransferase subfamily. In terms of assembly, homodimer. The cofactor is pyridoxal 5'-phosphate.

The catalysed reaction is L-histidinol phosphate + 2-oxoglutarate = 3-(imidazol-4-yl)-2-oxopropyl phosphate + L-glutamate. It participates in amino-acid biosynthesis; L-histidine biosynthesis; L-histidine from 5-phospho-alpha-D-ribose 1-diphosphate: step 7/9. In Bacillus licheniformis (strain ATCC 14580 / DSM 13 / JCM 2505 / CCUG 7422 / NBRC 12200 / NCIMB 9375 / NCTC 10341 / NRRL NRS-1264 / Gibson 46), this protein is Histidinol-phosphate aminotransferase.